We begin with the raw amino-acid sequence, 364 residues long: Methylthioribose-1-phosphate isomerase (364 aa).

Residues 49–51 (RGA), Arg-89, and Gln-201 contribute to the substrate site. Catalysis depends on Asp-242, which acts as the Proton donor. 252–253 (NK) is a binding site for substrate.

Belongs to the eIF-2B alpha/beta/delta subunits family. MtnA subfamily.

The catalysed reaction is 5-(methylsulfanyl)-alpha-D-ribose 1-phosphate = 5-(methylsulfanyl)-D-ribulose 1-phosphate. It participates in amino-acid biosynthesis; L-methionine biosynthesis via salvage pathway; L-methionine from S-methyl-5-thio-alpha-D-ribose 1-phosphate: step 1/6. Its function is as follows. Catalyzes the interconversion of methylthioribose-1-phosphate (MTR-1-P) into methylthioribulose-1-phosphate (MTRu-1-P). This is Methylthioribose-1-phosphate isomerase from Leptospira interrogans serogroup Icterohaemorrhagiae serovar Lai (strain 56601).